The primary structure comprises 41 residues: Urotensin-1 (41 aa).

A Valine amide modification is found at Val41.

It belongs to the sauvagine/corticotropin-releasing factor/urotensin I family.

It is found in the secreted. Functionally, urotensin is found in the teleost caudal neurosecretory system. It has a suggested role in osmoregulation and as a corticotropin-releasing factor. This Catostomus commersonii (White sucker) protein is Urotensin-1.